A 318-amino-acid chain; its full sequence is Putative 2-hydroxyacid dehydrogenase SSP0606 (318 aa).

Residues 156 to 157, 235 to 237, and D261 each bind NAD(+); these read EI and ASR. R237 is an active-site residue. E266 is an active-site residue. Residue H284 is the Proton donor of the active site. 284–287 contributes to the NAD(+) binding site; sequence HIGN.

The protein belongs to the D-isomer specific 2-hydroxyacid dehydrogenase family.

This is Putative 2-hydroxyacid dehydrogenase SSP0606 from Staphylococcus saprophyticus subsp. saprophyticus (strain ATCC 15305 / DSM 20229 / NCIMB 8711 / NCTC 7292 / S-41).